The chain runs to 1033 residues: Probable LRR receptor-like serine/threonine-protein kinase At1g56140 (1033 aa).

The N-terminal stretch at 1 to 28 (MLRLWRYLCLLLTVWFLCNFGPVYVVRA) is a signal peptide. At 29–636 (QNRTGATTHP…PSKGKSMTGT (608 aa)) the chain is on the extracellular side. N-linked (GlcNAc...) asparagine glycosylation is found at Asn30, Asn60, and Asn94. 13 LRR repeats span residues 97 to 121 (ICRI…LWTL), 122 to 145 (EYLT…LGNL), 147 to 169 (RMRW…IGLL), 170 to 193 (TDLR…IGRC), 195 to 217 (KLQQ…FANL), 241 to 264 (WTKL…SFSN), 265 to 288 (LTSL…FIKD), 289 to 313 (MKSL…IGEY), 314 to 337 (SSLR…LFNL), 339 to 361 (QLTH…KGQS), 363 to 382 (SNVD…WVSL), 383 to 406 (PNLN…VLSG), and 422 to 445 (IYSD…VFER). The N-linked (GlcNAc...) asparagine glycan is linked to Asn144. A glycan (N-linked (GlcNAc...) asparagine) is linked at Asn181. Asn264, Asn280, and Asn301 each carry an N-linked (GlcNAc...) asparagine glycan. N-linked (GlcNAc...) asparagine glycosylation is found at Asn347 and Asn351. A glycan (N-linked (GlcNAc...) asparagine) is linked at Asn393. Asn579 carries an N-linked (GlcNAc...) asparagine glycan. The chain crosses the membrane as a helical span at residues 637–657 (IVGVIVGVGLLSIISGVVIFI). The Cytoplasmic segment spans residues 658-1033 (IRKRRKRYTD…MLGAQMNEGR (376 aa)). Phosphothreonine is present on Thr682. Residues 693–951 (FDPSNKLGEG…LCTQTSHALR (259 aa)) enclose the Protein kinase domain. Residues 699–707 (LGEGGFGPV) and Lys721 each bind ATP. Tyr766 is modified (phosphotyrosine). Asp817 acts as the Proton acceptor in catalysis. Phosphoserine occurs at positions 821 and 850. Phosphothreonine occurs at positions 851 and 856. The residue at position 864 (Tyr864) is a Phosphotyrosine. The tract at residues 1012-1033 (SEISPRNNDARPMLGAQMNEGR) is disordered.

The protein belongs to the protein kinase superfamily. Ser/Thr protein kinase family.

Its subcellular location is the membrane. The enzyme catalyses L-seryl-[protein] + ATP = O-phospho-L-seryl-[protein] + ADP + H(+). The catalysed reaction is L-threonyl-[protein] + ATP = O-phospho-L-threonyl-[protein] + ADP + H(+). In Arabidopsis thaliana (Mouse-ear cress), this protein is Probable LRR receptor-like serine/threonine-protein kinase At1g56140.